An 843-amino-acid chain; its full sequence is Potassium transporter 10 (843 aa).

Residues 1–15 (MKSPSPVDPESPSSP) are compositionally biased toward low complexity. The interval 1 to 25 (MKSPSPVDPESPSSPDCKGGSSSKR) is disordered. Residues 1 to 34 (MKSPSPVDPESPSSPDCKGGSSSKRRRLPWRMTM) lie on the Cytoplasmic side of the membrane. The helical transmembrane segment at 35–55 (SLAYQSLGVVYGDLSTSPLYV) threads the bilayer. Topologically, residues 56 to 72 (YKAAFAEDIQHSETNEE) are vacuolar. The helical transmembrane segment at 73 to 93 (ILGVLSFVFWTLTLVPLLKYV) threads the bilayer. Residues 94-183 (CVVLRADDNG…LLERHKVLQR (90 aa)) lie on the Cytoplasmic side of the membrane. A helical transmembrane segment spans residues 184 to 204 (VLLVLALVGTCMVIGDGVLTP). Residues 205–225 (AISVFSAVSGLELSMEKHQHK) lie on the Vacuolar side of the membrane. The helical transmembrane segment at 226–246 (YVEVPIACFVLVCLFCLQHYG) threads the bilayer. Topologically, residues 247–249 (THR) are cytoplasmic. The helical transmembrane segment at 250–270 (VGFLFAPIVITWLLCISMIGV) threads the bilayer. At 271–298 (YNIVHWEPNVYRALSPYYMYKFLKKTQR) the chain is on the vacuolar side. A helical transmembrane segment spans residues 299–319 (GGWMSLGGILLCITGSEAMFA). Over 320 to 326 (DLGHFNQ) the chain is Cytoplasmic. A helical membrane pass occupies residues 327-347 (LSIQIAFTCMVYPSLILAYMG). The Vacuolar segment spans residues 348–377 (QAAYLCKHHIIESDYRIGFYVSVPEKIRWP). A helical transmembrane segment spans residues 378-398 (VLAIAILAAVVGSQAVITGTF). Over 399–425 (SMIKQCTALGCFPRVKIVHTSDKVHGQ) the chain is Cytoplasmic. The helical transmembrane segment at 426-446 (IYIPEINWILMILCLAITIGF) threads the bilayer. Over 447–451 (RDTKH) the chain is Vacuolar. A helical membrane pass occupies residues 452–472 (LGNASGLAVITVMLVTTCLMS). The Cytoplasmic segment spans residues 473–482 (LVIVLCWHKS). Residues 483 to 505 (IFLAFGFIIFFGTIEALYFSASL) traverse the membrane as a helical segment. The Vacuolar segment spans residues 506–510 (IKFRE). The chain crosses the membrane as a helical span at residues 511–531 (GAWVPIVLAFIFMAIMCIWHY). Residues 532 to 843 (GTIKKYEFDL…TLEVGMIYYV (312 aa)) are Cytoplasmic-facing. The tract at residues 667–747 (AASSKPKNVC…IMSPSPSPPP (81 aa)) is disordered. Over residues 718-735 (GGSGSGSGRGSSRGGGGA) the composition is skewed to gly residues.

The protein belongs to the HAK/KUP transporter (TC 2.A.72.3) family. In terms of tissue distribution, expressed in roots, shoots, and panicle at flowering stage.

It localises to the vacuole membrane. Functionally, high-affinity potassium transporter. This chain is Potassium transporter 10 (HAK10), found in Oryza sativa subsp. japonica (Rice).